Reading from the N-terminus, the 145-residue chain is Basic phospholipase A2 cL038 (145 aa).

The signal sequence occupies residues 1–21; sequence MYPAHLLVLLAVCVSLLGASA. Residues 22–27 constitute a propeptide that is removed on maturation; that stretch reads IPPLPL. 7 cysteine pairs are disulfide-bonded: C38–C98, C54–C144, C56–C72, C71–C125, C78–C118, C87–C111, and C105–C116. Residues Y55, G57, and G59 each coordinate Ca(2+). H75 is an active-site residue. D76 lines the Ca(2+) pocket. The active site involves D119.

This sequence belongs to the phospholipase A2 family. Group I subfamily. D49 sub-subfamily. Ca(2+) is required as a cofactor. In terms of tissue distribution, expressed by the venom gland.

It is found in the secreted. The catalysed reaction is a 1,2-diacyl-sn-glycero-3-phosphocholine + H2O = a 1-acyl-sn-glycero-3-phosphocholine + a fatty acid + H(+). In terms of biological role, PLA2 catalyzes the calcium-dependent hydrolysis of the 2-acyl groups in 3-sn-phosphoglycerides. The chain is Basic phospholipase A2 cL038 from Laticauda semifasciata (Black-banded sea krait).